A 572-amino-acid polypeptide reads, in one-letter code: Proline--tRNA ligase (572 aa).

Belongs to the class-II aminoacyl-tRNA synthetase family. ProS type 1 subfamily. Homodimer.

Its subcellular location is the cytoplasm. The catalysed reaction is tRNA(Pro) + L-proline + ATP = L-prolyl-tRNA(Pro) + AMP + diphosphate. Its function is as follows. Catalyzes the attachment of proline to tRNA(Pro) in a two-step reaction: proline is first activated by ATP to form Pro-AMP and then transferred to the acceptor end of tRNA(Pro). As ProRS can inadvertently accommodate and process non-cognate amino acids such as alanine and cysteine, to avoid such errors it has two additional distinct editing activities against alanine. One activity is designated as 'pretransfer' editing and involves the tRNA(Pro)-independent hydrolysis of activated Ala-AMP. The other activity is designated 'posttransfer' editing and involves deacylation of mischarged Ala-tRNA(Pro). The misacylated Cys-tRNA(Pro) is not edited by ProRS. The sequence is that of Proline--tRNA ligase from Salmonella arizonae (strain ATCC BAA-731 / CDC346-86 / RSK2980).